Consider the following 316-residue polypeptide: Transcription initiation factor IIB (316 aa).

Residues 7 to 38 (FRLRCPVCGSTDIVFNEETGEYVCARCGTIVL) form a TFIIB-type zinc finger. Cys11, Cys14, Cys30, and Cys33 together coordinate Zn(2+). Residues 51–73 (FTPEERERRGRTGAPLSPTLHDH) form a disordered region. 2 repeat units span residues 124-207 (NELD…TKEL) and 218-299 (DHIP…EIMK).

The protein belongs to the TFIIB family.

In terms of biological role, stabilizes TBP binding to an archaeal box-A promoter. Also responsible for recruiting RNA polymerase II to the pre-initiation complex (DNA-TBP-TFIIB). In Ignicoccus hospitalis (strain KIN4/I / DSM 18386 / JCM 14125), this protein is Transcription initiation factor IIB.